The following is a 122-amino-acid chain: Aspartate 1-decarboxylase (122 aa).

The active-site Schiff-base intermediate with substrate; via pyruvic acid is S25. Residue S25 is modified to Pyruvic acid (Ser). Position 57 (T57) interacts with substrate. The Proton donor role is filled by Y58. 73–75 serves as a coordination point for substrate; it reads GAA.

It belongs to the PanD family. As to quaternary structure, heterooctamer of four alpha and four beta subunits. Pyruvate is required as a cofactor. Is synthesized initially as an inactive proenzyme, which is activated by self-cleavage at a specific serine bond to produce a beta-subunit with a hydroxyl group at its C-terminus and an alpha-subunit with a pyruvoyl group at its N-terminus.

It is found in the cytoplasm. It carries out the reaction L-aspartate + H(+) = beta-alanine + CO2. It participates in cofactor biosynthesis; (R)-pantothenate biosynthesis; beta-alanine from L-aspartate: step 1/1. Functionally, catalyzes the pyruvoyl-dependent decarboxylation of aspartate to produce beta-alanine. In Bordetella pertussis (strain Tohama I / ATCC BAA-589 / NCTC 13251), this protein is Aspartate 1-decarboxylase.